We begin with the raw amino-acid sequence, 382 residues long: Putative UDP-sugar transporter DDB_G0278631 (382 aa).

7 consecutive transmembrane segments (helical) span residues 117–137 (FSAS…ILHI), 183–203 (MYSA…YFIL), 211–231 (IIAS…TDLS), 234–254 (SLGY…LIYV), 264–284 (YDML…LMIV), 302–322 (FQAY…CIFF), and 354–374 (IIIH…SIWY).

It belongs to the TPT transporter family. SLC35D subfamily.

The protein resides in the membrane. May be nvolved in the import of UDP-sugars. This Dictyostelium discoideum (Social amoeba) protein is Putative UDP-sugar transporter DDB_G0278631.